A 784-amino-acid chain; its full sequence is Repetin (784 aa).

Residues 1–91 are S-100-like; sequence MAQLLNSILS…VQACYHKLDN (91 aa). EF-hand domains lie at 13-48 and 49-84; these read DVFHKYAKGNGDCALLCKEELKQLLLAEFGDILQRP and NDPETVETILNLLDQDRDGHIDFHEYLLLVFQLVQA. Residues Glu32, Asp62, Asp64, Asp66, His68, and Glu73 each coordinate Ca(2+). Disordered stretches follow at residues 92–221, 282–584, 601–661, and 677–784; these read KSHG…QAKW, GCGQ…SHYI, TEGT…HQHK, and RDWQ…NHQR. Positions 124–201 are enriched in basic and acidic residues; the sequence is RHEEERQNSH…FSFDQSERQS (78 aa). 7 stretches are compositionally biased toward polar residues: residues 286–296, 304–343, 356–392, 400–486, 504–584, 610–646, and 680–695; these read TDRQGQSSHYG, SYHYGQTDRQGQSSHYSQTDRQGQSSHYSQPDRQGQSSHY, DQTNRQGQGSHYSQPNRQGQSSHYGQPDTQDQSSHYG, SSHY…QSSH, GQGQ…SHYI, VEQSGRSGRLSQQTPGQEGYQNQGQGFQSRDSQQNGH, and QSCSSEQGHRQAQTRQ. 2 stretches are compositionally biased toward basic and acidic residues: residues 704-722 and 729-784; these read WAEEEQGHQTWDRHSHESQ and QDRR…NHQR.

The protein belongs to the S100-fused protein family. Post-translationally, potential substrate of transglutaminase. Some arginines are probably converted to citrullines by peptidylarginine deimidase. Expression is scattered in the normal epidermis but strong in the acrosyringium, the inner hair root sheath and in the filiform papilli of the tongue.

Its subcellular location is the secreted. It localises to the extracellular space. The protein localises to the extracellular matrix. In terms of biological role, involved in the cornified cell envelope formation. Multifunctional epidermal matrix protein. Reversibly binds calcium. In Homo sapiens (Human), this protein is Repetin (RPTN).